Here is a 570-residue protein sequence, read N- to C-terminus: Formate--tetrahydrofolate ligase (570 aa).

65–72 contributes to the ATP binding site; that stretch reads TPHGEGKT.

It belongs to the formate--tetrahydrofolate ligase family.

The catalysed reaction is (6S)-5,6,7,8-tetrahydrofolate + formate + ATP = (6R)-10-formyltetrahydrofolate + ADP + phosphate. It functions in the pathway one-carbon metabolism; tetrahydrofolate interconversion. This chain is Formate--tetrahydrofolate ligase, found in Shewanella sp. (strain ANA-3).